The sequence spans 792 residues: Zinc finger protein 606 (792 aa).

Residues 62–133 (VTFKDVAVDF…EQACPQRTCP (72 aa)) enclose the KRAB domain. The segment at 289–311 (FKCTDAVKSFNHIIHFGDHKGIH) adopts a C2H2-type 1; degenerate zinc-finger fold. A C2H2-type 2; degenerate zinc finger spans residues 317–344 (YEYKECHQIFNQSPSFNEHPRLHVGENQ). The segment at 400-422 (YDYNECGTSFIWSSYLIQHKKTH) adopts a C2H2-type 3; degenerate zinc-finger fold. C2H2-type zinc fingers lie at residues 428–450 (YECD…ERTH), 456–478 (YECN…KRIH), 484–506 (YVCN…QRTH), 512–534 (FECT…MRMH), 540–562 (FKCD…ERTH), 568–590 (YKCT…QRTH), 596–618 (YNCQ…EIIH), 624–646 (YECN…QRTH), 652–674 (YECN…RRIH), 680–702 (YKCN…RRTH), 708–730 (YRCN…LRNH), 736–758 (YKCN…QRMH), and 764–786 (FICS…QRNH).

The protein belongs to the krueppel C2H2-type zinc-finger protein family. As to expression, widely expressed in adult and fetal tissues.

Its subcellular location is the nucleus. Its function is as follows. May act as a transcriptional repressor. The protein is Zinc finger protein 606 (ZNF606) of Homo sapiens (Human).